The chain runs to 218 residues: Pyridoxine/pyridoxamine 5'-phosphate oxidase (218 aa).

Residues 14-17 and Lys72 contribute to the substrate site; that span reads RREY. FMN is bound by residues 67–72, 82–83, Arg88, Lys89, and Gln111; these read RIVLLK and YT. Tyr129, Arg133, and Ser137 together coordinate substrate. Residues 146–147 and Trp191 contribute to the FMN site; that span reads QS. 197–199 is a binding site for substrate; that stretch reads RLH. Arg201 contacts FMN.

This sequence belongs to the pyridoxamine 5'-phosphate oxidase family. In terms of assembly, homodimer. It depends on FMN as a cofactor.

It catalyses the reaction pyridoxamine 5'-phosphate + O2 + H2O = pyridoxal 5'-phosphate + H2O2 + NH4(+). The enzyme catalyses pyridoxine 5'-phosphate + O2 = pyridoxal 5'-phosphate + H2O2. It functions in the pathway cofactor metabolism; pyridoxal 5'-phosphate salvage; pyridoxal 5'-phosphate from pyridoxamine 5'-phosphate: step 1/1. It participates in cofactor metabolism; pyridoxal 5'-phosphate salvage; pyridoxal 5'-phosphate from pyridoxine 5'-phosphate: step 1/1. Functionally, catalyzes the oxidation of either pyridoxine 5'-phosphate (PNP) or pyridoxamine 5'-phosphate (PMP) into pyridoxal 5'-phosphate (PLP). In Escherichia coli O7:K1 (strain IAI39 / ExPEC), this protein is Pyridoxine/pyridoxamine 5'-phosphate oxidase.